A 68-amino-acid chain; its full sequence is Antimicrobial peptide VpCT3 (68 aa).

Residues methionine 1–alanine 23 form the signal peptide. The residue at position 36 (leucine 36) is a Leucine amide. Residues glycine 37 to arginine 68 constitute a propeptide that is removed on maturation.

It belongs to the non-disulfide-bridged peptide (NDBP) superfamily. Short antimicrobial peptide (group 4) family. As to expression, expressed by the venom gland.

The protein resides in the secreted. Its subcellular location is the target cell membrane. Antimicrobial peptide with weak activity against all bacteria tested (MIC&gt;100 uM) and all yeasts tested (MIC&gt;200 uM). Also provokes weak hemolysis on human erythrocytes (HC(50)=83.7 uM). The polypeptide is Antimicrobial peptide VpCT3 (Mesomexovis punctatus (Scorpion)).